The chain runs to 622 residues: Kinesin light chain 2 (622 aa).

Positions Ile78–Ile143 form a coiled coil. Residues Lys145–Leu164 show a composition bias toward basic and acidic residues. The interval Lys145–Gly191 is disordered. Phosphoserine occurs at positions 151, 175, and 179. Positions Pro180 to Gly190 are enriched in gly residues. TPR repeat units follow at residues Leu198 to Thr231, Ala240 to Thr273, Ala282 to Val315, Ala324 to Arg357, and Ala366 to Lys399. Ser445 is modified (phosphoserine). The TPR 6 repeat unit spans residues Asn449–Gly482. 2 disordered regions span residues Ser476 to Lys548 and Lys563 to Gly622. The segment covering Glu493–Arg509 has biased composition (basic and acidic residues). Phosphoserine is present on residues Ser508 and Ser521. Over residues Gly538–Gly547 the composition is skewed to low complexity. 6 positions are modified to phosphoserine: Ser581, Ser582, Ser589, Ser608, Ser610, and Ser615. The span at Leu601–Gly622 shows a compositional bias: low complexity.

This sequence belongs to the kinesin light chain family. In terms of assembly, oligomeric complex composed of two heavy chains and two light chains. Interacts (via TPR repeats) with PLEKHM2.

It localises to the cytoplasm. The protein localises to the cytoskeleton. It is found in the lysosome membrane. Functionally, kinesin is a microtubule-associated force-producing protein that plays a role in organelle transport. The light chain functions in coupling of cargo to the heavy chain or in the modulation of its ATPase activity. Through binding with PLEKHM2 and ARL8B, recruits kinesin-1 to lysosomes and hence direct lysosomes movement toward microtubule plus ends. This chain is Kinesin light chain 2, found in Homo sapiens (Human).